We begin with the raw amino-acid sequence, 227 residues long: Guanylate kinase (227 aa).

In terms of domain architecture, Guanylate kinase-like spans 21-199; that stretch reads GNLFMVVAPS…ALAELECIVA (179 aa). 28–35 provides a ligand contact to ATP; it reads APSGAGKS.

It belongs to the guanylate kinase family.

Its subcellular location is the cytoplasm. The enzyme catalyses GMP + ATP = GDP + ADP. Its function is as follows. Essential for recycling GMP and indirectly, cGMP. The protein is Guanylate kinase of Burkholderia mallei (strain ATCC 23344).